Consider the following 417-residue polypeptide: Serpin A3-7 (417 aa).

The first 25 residues, Met-1–Cys-25, serve as a signal peptide directing secretion. Residues Asn-103, Asn-183, Asn-221, and Asn-267 are each glycosylated (N-linked (GlcNAc...) asparagine).

This sequence belongs to the serpin family. In terms of assembly, homodimer.

The protein localises to the cytoplasmic vesicle. Its subcellular location is the secretory vesicle. The protein resides in the chromaffin granule. It is found in the secreted. In terms of biological role, serine protease inhibitor. This is Serpin A3-7 from Bos taurus (Bovine).